The following is a 452-amino-acid chain: tRNA modification GTPase MnmE (452 aa).

(6S)-5-formyl-5,6,7,8-tetrahydrofolate-binding residues include Arg21, Glu78, and Lys118. One can recognise a TrmE-type G domain in the interval 214–375 (GMKVVIAGRP…LREHLKQSMG (162 aa)). Position 224 (Asn224) interacts with K(+). Residues 224 to 229 (NAGKSS), 243 to 249 (TDIAGTT), 268 to 271 (DTAG), and 333 to 336 (NKAD) contribute to the GTP site. Ser228 lines the Mg(2+) pocket. The K(+) site is built by Thr243, Ile245, and Thr248. Mg(2+) is bound at residue Thr249. Lys452 contributes to the (6S)-5-formyl-5,6,7,8-tetrahydrofolate binding site.

The protein belongs to the TRAFAC class TrmE-Era-EngA-EngB-Septin-like GTPase superfamily. TrmE GTPase family. As to quaternary structure, homodimer. Heterotetramer of two MnmE and two MnmG subunits. K(+) is required as a cofactor.

It is found in the cytoplasm. Functionally, exhibits a very high intrinsic GTPase hydrolysis rate. Involved in the addition of a carboxymethylaminomethyl (cmnm) group at the wobble position (U34) of certain tRNAs, forming tRNA-cmnm(5)s(2)U34. The chain is tRNA modification GTPase MnmE from Pasteurella multocida (strain Pm70).